The primary structure comprises 338 residues: Probable G-protein coupled receptor 160 (338 aa).

Topologically, residues 1-23 (MTALSSENCSFQYQLRQTNQPLD) are extracellular. A glycan (N-linked (GlcNAc...) asparagine) is linked at asparagine 8. The chain crosses the membrane as a helical span at residues 24 to 44 (VNYLLFLIILGKILLNILTLG). Over 45–58 (MRRKNTCQNFMEYF) the chain is Cytoplasmic. A helical transmembrane segment spans residues 59–79 (CISLAFVDLLLLVNISIILYF). The Extracellular segment spans residues 80-93 (RDFVLLSIRFTKYH). A helical transmembrane segment spans residues 94-114 (ICLFTQIISFTYGFLHYPVFL). At 115–136 (TACIDYCLNFSKTTKLSFKCQK) the chain is on the cytoplasmic side. Residues 137-157 (LFYFFTVILIWISVLAYVLGD) form a helical membrane-spanning segment. Residues 158–177 (PAIYQSLKAQNAYSRHCPFY) lie on the Extracellular side of the membrane. The helical transmembrane segment at 178–198 (VSIQSYWLSFFMVMILFVAFI) threads the bilayer. Topologically, residues 199-244 (TCWEEVTTLVQAIRITSYMNETILYFPFSSHSSYTVRSKKIFLSKL) are cytoplasmic. A helical transmembrane segment spans residues 245–265 (IVCFLSTWLPFVLLQVIIVLL). Topologically, residues 266–268 (KVQ) are extracellular. A helical transmembrane segment spans residues 269-289 (IPAYIEMNIPWLYFVNSFLIA). At 290–338 (TVYWFNCHKLNLKDIGLPLDPFVNWKCCFIPLTIPNLEQIEKPISIMIC) the chain is on the cytoplasmic side.

The protein belongs to the G-protein coupled receptor 1 family.

It is found in the cell membrane. Functionally, orphan receptor. The protein is Probable G-protein coupled receptor 160 (GPR160) of Homo sapiens (Human).